Reading from the N-terminus, the 212-residue chain is MQQEIMEAVKKAKELSRPRNFTQSMDVILNIKDLDVNKPENRFDEEVSLPNGRGKDVKIAVIADGELALQAKNAGADLVITKDELEELGKNRKEAKKLANQYEFFVAQADMMPLVGRFMGPVLGPRKKMPKPVPATINPEPILNKLRDTVKVRIKDQPVVHTVVGTEDMDDEKLAENIEAVLQTIDRKLEKGRNQLKSMYVKTTMGPVVRVI.

Belongs to the universal ribosomal protein uL1 family. As to quaternary structure, part of the 50S ribosomal subunit.

Functionally, binds directly to 23S rRNA. Probably involved in E site tRNA release. Protein L1 is also a translational repressor protein, it controls the translation of its operon by binding to its mRNA. The polypeptide is Large ribosomal subunit protein uL1 (Methanothermobacter thermautotrophicus (strain ATCC 29096 / DSM 1053 / JCM 10044 / NBRC 100330 / Delta H) (Methanobacterium thermoautotrophicum)).